Here is a 628-residue protein sequence, read N- to C-terminus: MSSSSSKPVNTGLVTPRRYSTMTGIRTGPSQSGTGSIPYSPTSPLSRNFSNYSIPMLRSNSTQTNVNGPTAFDLGVTEKLMSPGTLDRYTRPALYPSKDLDYLKNEYVNYESTTSQQTNSKGLKESNFVGSGIITSIRIRPIGKNQGVWSHGKLSNDPYGREYIRQQTSTSSSTIQQEYLFNNVFGMESKNYDIYKRSVKSVVRNVFSGYNGIVFAYGMTGTGKTYSMQGTENEPGIIPLAMNDLFEMVENNSDDDTFQIRISYLEIYNERIRDLIGNSDEEPRIRENASGEVNVTPLTRVLVTSPEEVSQVIEQCNAIRKTAATDFNTYSSRSHAILQVFLIRNNPTAHTSQISSLSLVDLAGSERASAHHERRKEGAFINKSLLTLGTVISRLSAAANPSLTSNSGHIPYRESKLTRLLQQSLSGQSQISLLATISIESNHTMETTNTLKFASRAQNLPQDIRQAEAVTNVQAELASLHSALEKNAQEVEYYASLVKQLTSDLEERDTYIAMLEAERSQGTAISRARLRMEELLSDHNFEIADLRDELQDKEQIIYALRYAQKQRDIADFNQSLAKFPHKILKKNVTRGSRSSSDQFSNETKTEILPDDQQQSKKDSVTQETQLLS.

Positions 2 to 122 (SSSSSKPVNT…TTSQQTNSKG (121 aa)) are interaction with mal3. Phosphoserine is present on serine 82. In terms of domain architecture, Kinesin motor spans 132 to 460 (GIITSIRIRP…LKFASRAQNL (329 aa)). 218-225 (GMTGTGKT) is a binding site for ATP. Residues 530-557 (LRMEELLSDHNFEIADLRDELQDKEQII) adopt a coiled-coil conformation. Positions 588-628 (VTRGSRSSSDQFSNETKTEILPDDQQQSKKDSVTQETQLLS) are disordered. Polar residues predominate over residues 589 to 602 (TRGSRSSSDQFSNE). The span at 603–620 (TKTEILPDDQQQSKKDSV) shows a compositional bias: basic and acidic residues.

It belongs to the TRAFAC class myosin-kinesin ATPase superfamily. Kinesin family. As to quaternary structure, interacts with mal3 and tip1.

The protein resides in the cytoplasm. The protein localises to the cytoskeleton. In terms of biological role, promotes microtubule growth, possibly through interactions with the microtubule end, and is important for establishing and maintaining polarized growth along the long axis of the cell. Acts as a kinesin motor protein that moves along microtubules and is required for proper localization of tea1 and tip1 to the cell tips and microtubules, respectively. ATPase activity stimulated via interaction with mal3. This Schizosaccharomyces pombe (strain 972 / ATCC 24843) (Fission yeast) protein is Kinesin-like protein tea2.